A 119-amino-acid polypeptide reads, in one-letter code: U-scoloptoxin(01)-Cw1a (119 aa).

An N-terminal signal peptide occupies residues 1-22 (MSKATNFYLFVLLGVFVALVRT). Positions 38–96 (SFSCDGKKPGYYADQQMECQVYHVCTPDNEHAVLLCGPGTIFNQKHLVCDFPSNYACAD) constitute a Chitin-binding type-2 domain. Residues Cys73 and Cys86 are joined by a disulfide bond.

The protein belongs to the scoloptoxin-01 family. Post-translationally, contains 3 disulfide bonds. In terms of tissue distribution, expressed by the venom gland.

It localises to the secreted. The chain is U-scoloptoxin(01)-Cw1a from Cormocephalus westwoodi (Westwood's green centipede).